The sequence spans 206 residues: Holliday junction branch migration complex subunit RuvA (206 aa).

The interval 1–63 (MIASLRGTVI…EDAMKLYGFI (63 aa)) is domain I. A domain II region spans residues 64 to 142 (DNESREMFSV…AFAAGVVDEG (79 aa)). The interval 143-153 (GEQISLPNANI) is flexible linker. Residues 154-206 (ASEVVVEQVSQALVGLGFSEKQSDDAVSFVLAADPSLDTSGALRAALAKLSGK) form a domain III region.

The protein belongs to the RuvA family. In terms of assembly, homotetramer. Forms an RuvA(8)-RuvB(12)-Holliday junction (HJ) complex. HJ DNA is sandwiched between 2 RuvA tetramers; dsDNA enters through RuvA and exits via RuvB. An RuvB hexamer assembles on each DNA strand where it exits the tetramer. Each RuvB hexamer is contacted by two RuvA subunits (via domain III) on 2 adjacent RuvB subunits; this complex drives branch migration. In the full resolvosome a probable DNA-RuvA(4)-RuvB(12)-RuvC(2) complex forms which resolves the HJ.

It is found in the cytoplasm. Its function is as follows. The RuvA-RuvB-RuvC complex processes Holliday junction (HJ) DNA during genetic recombination and DNA repair, while the RuvA-RuvB complex plays an important role in the rescue of blocked DNA replication forks via replication fork reversal (RFR). RuvA specifically binds to HJ cruciform DNA, conferring on it an open structure. The RuvB hexamer acts as an ATP-dependent pump, pulling dsDNA into and through the RuvAB complex. HJ branch migration allows RuvC to scan DNA until it finds its consensus sequence, where it cleaves and resolves the cruciform DNA. The sequence is that of Holliday junction branch migration complex subunit RuvA from Corynebacterium glutamicum (strain ATCC 13032 / DSM 20300 / JCM 1318 / BCRC 11384 / CCUG 27702 / LMG 3730 / NBRC 12168 / NCIMB 10025 / NRRL B-2784 / 534).